Reading from the N-terminus, the 380-residue chain is TPR repeat-containing thioredoxin TDX (380 aa).

An N-acetylvaline modification is found at Val-2. The span at Thr-49–Thr-59 shows a compositional bias: basic and acidic residues. Positions Thr-49–Glu-115 are disordered. Positions Asp-69–Asn-91 are enriched in acidic residues. The segment covering Asp-106–Glu-115 has biased composition (basic and acidic residues). 3 TPR repeats span residues Ala-112–Ser-145, Ile-147–Ser-179, and Lys-181–Glu-213. The segment covering Arg-240–Ala-263 has biased composition (basic and acidic residues). The segment at Arg-240–Ala-265 is disordered. In terms of domain architecture, Thioredoxin spans Arg-252–Ser-378. Residues Cys-304 and Cys-307 each act as nucleophile in the active site. A disulfide bridge connects residues Cys-304 and Cys-307.

Belongs to the thioredoxin family. Oligomerization under high temperature.

Its function is as follows. Thiol-disulfide oxidoreductase that possesses insulin disulfide bonds reducing activity, disulfide reductase, foldase chaperone and holdase chaperone activities. Heat shock causes oligomerization and formation of high molecular weiht (HMW) complexes with concomitant functional switching from a disulfide reductase and foldase chaperone to a holdase chaperone. May interact with HSP70 proteins through the TPR repeats. This chain is TPR repeat-containing thioredoxin TDX (TDX), found in Arabidopsis thaliana (Mouse-ear cress).